A 416-amino-acid polypeptide reads, in one-letter code: UDP-N-acetylmuramoylalanine--D-glutamate ligase (416 aa).

Gly-104–Thr-110 contributes to the ATP binding site.

The protein belongs to the MurCDEF family.

The protein localises to the cytoplasm. It carries out the reaction UDP-N-acetyl-alpha-D-muramoyl-L-alanine + D-glutamate + ATP = UDP-N-acetyl-alpha-D-muramoyl-L-alanyl-D-glutamate + ADP + phosphate + H(+). The protein operates within cell wall biogenesis; peptidoglycan biosynthesis. In terms of biological role, cell wall formation. Catalyzes the addition of glutamate to the nucleotide precursor UDP-N-acetylmuramoyl-L-alanine (UMA). The sequence is that of UDP-N-acetylmuramoylalanine--D-glutamate ligase from Francisella tularensis subsp. holarctica (strain FTNF002-00 / FTA).